A 219-amino-acid chain; its full sequence is Proteasome subunit beta type-9 (219 aa).

Residues 1-20 (MLRAGAPTAGSFRTEEVHTG) constitute a propeptide, removed in mature form. T21 (nucleophile) is an active-site residue. An N6-acetyllysine mark is found at K53 and K109.

The protein belongs to the peptidase T1B family. As to quaternary structure, the 26S proteasome consists of a 20S proteasome core and two 19S regulatory subunits. The 20S proteasome core is composed of 28 subunits that are arranged in four stacked rings, resulting in a barrel-shaped structure. The two end rings are each formed by seven alpha subunits, and the two central rings are each formed by seven beta subunits. The catalytic chamber with the active sites is on the inside of the barrel. Component of the immunoproteasome, where it displaces the equivalent housekeeping subunit PSMB6. Component of the spermatoproteasome, a form of the proteasome specifically found in testis. In terms of processing, autocleaved. The resulting N-terminal Thr residue of the mature subunit is responsible for the nucleophile proteolytic activity.

The protein resides in the cytoplasm. The protein localises to the nucleus. The catalysed reaction is Cleavage of peptide bonds with very broad specificity.. The proteasome is a multicatalytic proteinase complex which is characterized by its ability to cleave peptides with Arg, Phe, Tyr, Leu, and Glu adjacent to the leaving group at neutral or slightly basic pH. The proteasome has an ATP-dependent proteolytic activity. This subunit is involved in antigen processing to generate class I binding peptides. In Mus musculus bactrianus (Southwestern Asian house mouse), this protein is Proteasome subunit beta type-9 (Psmb9).